The chain runs to 492 residues: Ketol-acid reductoisomerase (NADP(+)) (492 aa).

The region spanning 14 to 208 is the KARI N-terminal Rossmann domain; the sequence is LDQLGKCRFM…GGHRAGVLQS (195 aa). NADP(+) contacts are provided by residues 45–48, Arg68, Arg76, Ser78, and 108–110; these read CGAQ and DKQ. Residue His132 is part of the active site. Gly158 contacts NADP(+). KARI C-terminal knotted domains follow at residues 209–344 and 345–485; these read SFVA…NAPQ and FDGK…MKDM. Positions 217, 221, 389, and 393 each coordinate Mg(2+). Ser414 contributes to the substrate binding site.

Belongs to the ketol-acid reductoisomerase family. Requires Mg(2+) as cofactor.

It carries out the reaction (2R)-2,3-dihydroxy-3-methylbutanoate + NADP(+) = (2S)-2-acetolactate + NADPH + H(+). It catalyses the reaction (2R,3R)-2,3-dihydroxy-3-methylpentanoate + NADP(+) = (S)-2-ethyl-2-hydroxy-3-oxobutanoate + NADPH + H(+). It functions in the pathway amino-acid biosynthesis; L-isoleucine biosynthesis; L-isoleucine from 2-oxobutanoate: step 2/4. It participates in amino-acid biosynthesis; L-valine biosynthesis; L-valine from pyruvate: step 2/4. Involved in the biosynthesis of branched-chain amino acids (BCAA). Catalyzes an alkyl-migration followed by a ketol-acid reduction of (S)-2-acetolactate (S2AL) to yield (R)-2,3-dihydroxy-isovalerate. In the isomerase reaction, S2AL is rearranged via a Mg-dependent methyl migration to produce 3-hydroxy-3-methyl-2-ketobutyrate (HMKB). In the reductase reaction, this 2-ketoacid undergoes a metal-dependent reduction by NADPH to yield (R)-2,3-dihydroxy-isovalerate. The polypeptide is Ketol-acid reductoisomerase (NADP(+)) (Pectobacterium atrosepticum (strain SCRI 1043 / ATCC BAA-672) (Erwinia carotovora subsp. atroseptica)).